A 321-amino-acid chain; its full sequence is Probable arabinan endo-1,5-alpha-L-arabinosidase A (321 aa).

An N-terminal signal peptide occupies residues 1–19 (MSASAFVAVASCLAALVHG). Asp-34 (proton acceptor) is an active-site residue. Glu-200 functions as the Proton donor in the catalytic mechanism.

It belongs to the glycosyl hydrolase 43 family.

It localises to the secreted. The catalysed reaction is Endohydrolysis of (1-&gt;5)-alpha-arabinofuranosidic linkages in (1-&gt;5)-arabinans.. The protein operates within glycan metabolism; L-arabinan degradation. Endo-1,5-alpha-L-arabinanase involved in degradation of pectin. Its preferred substrate is linear 1,5-alpha-L-arabinan. This chain is Probable arabinan endo-1,5-alpha-L-arabinosidase A (abnA), found in Neosartorya fischeri (strain ATCC 1020 / DSM 3700 / CBS 544.65 / FGSC A1164 / JCM 1740 / NRRL 181 / WB 181) (Aspergillus fischerianus).